A 370-amino-acid chain; its full sequence is MYNLSSIIRRKSTRIYVGKVPIGENAPISVQSMTNTKTTDVAATVAQIKALQSVGADIVRVSVPTMEAAEAFNQIKQQASVPLVADIHFDYRIALKVAEYGVDCLRINPGNIGSELRIRDVVASARHHGIPIRIGINGGSLEKDIQEKYKEPTPEALLESAMRQVSFLERLNFDQFKISVKASDVFLAIHSYRLLATRIDQPLHLGITEAGGARSGSIKSAIGLGILLSEGIGDTLRISLAADPTEEIKAGFDILKSLRIRSRGINFIACPTCSRQEFDVIGTVNALEKRLEDIVTPMDVSIIGCVVNGPGEALVSTLGVTGARNKSGFFEEGERKGRLDNQQIIDQLEAKIRAKAALLDKKNRIQINQL.

C270, C273, C305, and E312 together coordinate [4Fe-4S] cluster.

It belongs to the IspG family. Requires [4Fe-4S] cluster as cofactor.

The enzyme catalyses (2E)-4-hydroxy-3-methylbut-2-enyl diphosphate + oxidized [flavodoxin] + H2O + 2 H(+) = 2-C-methyl-D-erythritol 2,4-cyclic diphosphate + reduced [flavodoxin]. It participates in isoprenoid biosynthesis; isopentenyl diphosphate biosynthesis via DXP pathway; isopentenyl diphosphate from 1-deoxy-D-xylulose 5-phosphate: step 5/6. Its function is as follows. Converts 2C-methyl-D-erythritol 2,4-cyclodiphosphate (ME-2,4cPP) into 1-hydroxy-2-methyl-2-(E)-butenyl 4-diphosphate. This chain is 4-hydroxy-3-methylbut-2-en-1-yl diphosphate synthase (flavodoxin), found in Hamiltonella defensa subsp. Acyrthosiphon pisum (strain 5AT).